Here is a 362-residue protein sequence, read N- to C-terminus: Olfactory receptor 5AU1 (362 aa).

Topologically, residues 1-79 are extracellular; it reads MTEFHLQSQM…TDPQLQRLLF (79 aa). An N-linked (GlcNAc...) asparagine glycan is attached at Asn-56. The helical transmembrane segment at 80-100 threads the bilayer; that stretch reads VVFLGMYTATLLGNLVMFLLI. Over 101-116 the chain is Cytoplasmic; sequence HVSATLHTPMYSLLKS. The chain crosses the membrane as a helical span at residues 117-139; sequence LSFLDFCYSSTVVPQTLVNFLAK. At 140 to 150 the chain is on the extracellular side; the sequence is RKVISYFGCMT. A disulfide bridge links Cys-148 with Cys-230. The helical transmembrane segment at 151–171 threads the bilayer; the sequence is QMFFYAGFATSECYLIAAMAY. Residues 172-194 lie on the Cytoplasmic side of the membrane; the sequence is DRYAAICNPLLYSTIMSPEVCAS. The chain crosses the membrane as a helical span at residues 195-215; the sequence is LIVGSYSAGFLNSLIHTGCIF. Topologically, residues 216-247 are extracellular; that stretch reads SLKFCGAHVVTHFFCDGPPILSLSCVDTSLCE. The chain crosses the membrane as a helical span at residues 248–268; the sequence is ILLFIFAGFNLLSCTLTILIS. Residues 269-290 lie on the Cytoplasmic side of the membrane; it reads YFLILNTILKMSSAQGRFKAFS. A helical membrane pass occupies residues 291-311; sequence TCASHLTAICLFFGTTLFMYL. At 312 to 322 the chain is on the extracellular side; that stretch reads RPRSSYSLTQD. Residues 323–343 traverse the membrane as a helical segment; that stretch reads RTVAVIYTVVIPVLNPLMYSL. The Cytoplasmic segment spans residues 344-362; that stretch reads RNKDVKKALIKVWGRKTME.

This sequence belongs to the G-protein coupled receptor 1 family.

Its subcellular location is the cell membrane. Odorant receptor. This Homo sapiens (Human) protein is Olfactory receptor 5AU1 (OR5AU1).